Consider the following 276-residue polypeptide: Secreted RxLR effector protein 150 (276 aa).

A signal peptide spans 1–18; the sequence is MRNIAFLIGLFFIGYSSC. The RxLR-dEER signature appears at 49–64; it reads RTLQADDRERILAEER.

This sequence belongs to the RxLR effector family.

The protein resides in the secreted. It localises to the host nucleus. It is found in the host cytoplasm. In terms of biological role, secreted effector that partially suppresses the host cell death induced by cell death-inducing proteins. This is Secreted RxLR effector protein 150 from Plasmopara viticola (Downy mildew of grapevine).